The chain runs to 102 residues: Noncompact myelin-associated protein (102 aa).

Residues Met1–Gly30 are Extracellular-facing. Residues Ala31 to Leu51 traverse the membrane as a helical segment. At Lys52 to Arg102 the chain is on the cytoplasmic side. The segment at Thr60–Arg102 is disordered. The span at Gly78–Phe92 shows a compositional bias: polar residues.

Glycosylated.

The protein resides in the cell membrane. Functionally, plays a role in myelin formation. The polypeptide is Noncompact myelin-associated protein (NCMAP) (Homo sapiens (Human)).